The primary structure comprises 328 residues: D-cysteine desulfhydrase (328 aa).

Lys51 bears the N6-(pyridoxal phosphate)lysine mark.

This sequence belongs to the ACC deaminase/D-cysteine desulfhydrase family. In terms of assembly, homodimer. Pyridoxal 5'-phosphate is required as a cofactor.

It catalyses the reaction D-cysteine + H2O = hydrogen sulfide + pyruvate + NH4(+) + H(+). In terms of biological role, catalyzes the alpha,beta-elimination reaction of D-cysteine and of several D-cysteine derivatives. It could be a defense mechanism against D-cysteine. This chain is D-cysteine desulfhydrase, found in Escherichia coli (strain SMS-3-5 / SECEC).